A 747-amino-acid chain; its full sequence is Major facilitator superfamily domain-containing protein 6-B (747 aa).

A run of 11 helical transmembrane segments spans residues Leu-15–Gln-35, Lys-75–Val-95, Thr-222–Val-242, Trp-271–Ile-291, Ile-306–His-326, Val-391–Trp-411, Thr-420–Ile-440, Val-453–Tyr-470, Gly-485–Leu-507, Leu-520–Ala-540, and Gly-546–Gly-566. Composition is skewed to polar residues over residues Asn-597–Asp-606 and Asn-652–Ala-668. Disordered stretches follow at residues Asn-597 to Ala-625 and Asn-652 to His-747. Residues Ser-675–Ser-685 are compositionally biased toward low complexity.

This sequence belongs to the major facilitator superfamily. MFSD6 family.

Its subcellular location is the membrane. The protein is Major facilitator superfamily domain-containing protein 6-B (mfsd6b) of Danio rerio (Zebrafish).